Reading from the N-terminus, the 191-residue chain is Protein GrpE (191 aa).

The span at 1–10 (MNHEEQKVET) shows a compositional bias: basic and acidic residues. Positions 1 to 28 (MNHEEQKVETMEQVEAQPVEPTDVDSEV) are disordered.

The protein belongs to the GrpE family. Homodimer.

Its subcellular location is the cytoplasm. In terms of biological role, participates actively in the response to hyperosmotic and heat shock by preventing the aggregation of stress-denatured proteins, in association with DnaK and GrpE. It is the nucleotide exchange factor for DnaK and may function as a thermosensor. Unfolded proteins bind initially to DnaJ; upon interaction with the DnaJ-bound protein, DnaK hydrolyzes its bound ATP, resulting in the formation of a stable complex. GrpE releases ADP from DnaK; ATP binding to DnaK triggers the release of the substrate protein, thus completing the reaction cycle. Several rounds of ATP-dependent interactions between DnaJ, DnaK and GrpE are required for fully efficient folding. The polypeptide is Protein GrpE (Aeromonas salmonicida (strain A449)).